A 339-amino-acid polypeptide reads, in one-letter code: RxLR effector protein SFI4 (339 aa).

Residues 1-24 form the signal peptide; the sequence is MRVLRVTFLWALLLLVAFSASVYA. A RxLR-dEER motif is present at residues 51–74; sequence RGLRNSGMKLNDAKDFKGAIAKLR. 4 TPR repeats span residues 106 to 139, 190 to 223, 232 to 265, and 274 to 307; these read AQILNDYGTVLIRAKQYDEAIEVLEDSVAMVEKI, IEASLRIAEGYKKLGNTKKNLKVLKDAVEAQNGE, AELYMELSTAHVAVGEIDDALRAAEVASAIFRQR, and AFSLNALAGVKMRQKKVDEAIKLLEQAHRIAVQI.

It belongs to the RxLR effector family.

The protein localises to the secreted. Its subcellular location is the host nucleus. The protein resides in the host cytoplasm. Functionally, effector that suppresses flg22-induced post-translational MAP kinase activation in tomato but not in Arabidopsis. The perception of highly conserved pathogen- or microbe-associated molecular patterns (PAMPs/MAMPs), such as flg22, triggers converging signaling pathways recruiting MAP kinase cascades and inducing transcriptional re-programming, yielding a generic antimicrobial response. This chain is RxLR effector protein SFI4, found in Phytophthora infestans (strain T30-4) (Potato late blight agent).